Reading from the N-terminus, the 336-residue chain is uncharacterized protein (336 aa).

Residues 123–323 (KTLMRDSGVP…YSSLINGILD (201 aa)) enclose the ATP-grasp domain.

Belongs to the D-alanine--D-alanine ligase family.

Could be involved in the biosynthesis of a cell wall component. This is an uncharacterized protein from Sinorhizobium fredii (strain NBRC 101917 / NGR234).